Here is a 460-residue protein sequence, read N- to C-terminus: Dynactin subunit 4 (460 aa).

Position 2 is an N-acetylalanine (alanine 2). The stretch at 152-172 forms a coiled coil; that stretch reads QQLAQKEKVERDRKKLARRRN. The residue at position 196 (serine 196) is a Phosphoserine. Residue lysine 215 forms a Glycyl lysine isopeptide (Lys-Gly) (interchain with G-Cter in SUMO2) linkage. Residue threonine 407 is modified to Phosphothreonine.

This sequence belongs to the dynactin subunit 4 family. In terms of assembly, subunit of dynactin, a multiprotein complex part of a tripartite complex with dynein and a adapter, such as BICDL1, BICD2 or HOOK3. The dynactin complex is built around ACTR1A/ACTB filament and consists of an actin-related filament composed of a shoulder domain, a pointed end and a barbed end. Its length is defined by its flexible shoulder domain. The soulder is composed of 2 DCTN1 subunits, 4 DCTN2 and 2 DCTN3. The 4 DCNT2 (via N-terminus) bind the ACTR1A filament and act as molecular rulers to determine the length. The pointed end is important for binding dynein-dynactin cargo adapters. Consists of 4 subunits: ACTR10, DCNT4, DCTN5 and DCTN6. The barbed end is composed of a CAPZA1:CAPZB heterodimers, which binds ACTR1A/ACTB filament and dynactin and stabilizes dynactin. Interacts with ATP7B, but not ATP7A, in a copper-dependent manner. Interacts with ANK2; this interaction is required for localization at costameres. Interacts with N4BP2L1.

It localises to the cytoplasm. The protein localises to the cytoskeleton. The protein resides in the microtubule organizing center. Its subcellular location is the centrosome. It is found in the stress fiber. It localises to the cell cortex. The protein localises to the myofibril. The protein resides in the sarcomere. Functionally, part of the dynactin complex that activates the molecular motor dynein for ultra-processive transport along microtubules. The protein is Dynactin subunit 4 (DCTN4) of Pongo abelii (Sumatran orangutan).